The following is a 361-amino-acid chain: Phospho-N-acetylmuramoyl-pentapeptide-transferase (361 aa).

Helical transmembrane passes span 27-47 (GALF…ISLL), 72-92 (TPTM…LLWA), 99-119 (VWIT…DDYL), 139-159 (ALIA…GLAY), 169-189 (AIVN…VGAG), 200-220 (GLAI…AYLV), 240-260 (LAVV…FNAP), 264-284 (IFMG…VAVA), 289-309 (IVLA…IIQV), and 338-358 (QVVI…LATL).

This sequence belongs to the glycosyltransferase 4 family. MraY subfamily. It depends on Mg(2+) as a cofactor.

Its subcellular location is the cell inner membrane. The catalysed reaction is UDP-N-acetyl-alpha-D-muramoyl-L-alanyl-gamma-D-glutamyl-meso-2,6-diaminopimeloyl-D-alanyl-D-alanine + di-trans,octa-cis-undecaprenyl phosphate = di-trans,octa-cis-undecaprenyl diphospho-N-acetyl-alpha-D-muramoyl-L-alanyl-D-glutamyl-meso-2,6-diaminopimeloyl-D-alanyl-D-alanine + UMP. The protein operates within cell wall biogenesis; peptidoglycan biosynthesis. Catalyzes the initial step of the lipid cycle reactions in the biosynthesis of the cell wall peptidoglycan: transfers peptidoglycan precursor phospho-MurNAc-pentapeptide from UDP-MurNAc-pentapeptide onto the lipid carrier undecaprenyl phosphate, yielding undecaprenyl-pyrophosphoryl-MurNAc-pentapeptide, known as lipid I. In Methylobacterium nodulans (strain LMG 21967 / CNCM I-2342 / ORS 2060), this protein is Phospho-N-acetylmuramoyl-pentapeptide-transferase.